A 426-amino-acid polypeptide reads, in one-letter code: MKAIGAPADLPVLMGDLAAQAREAARSLGLASTAQKNEALDAMARAIRSNAAAILQANAQDVADARAGGATAAFLDRLTLTQARVEAMADGVKVVREIDDPVGRVTERWQRPNGMTIERVRVPLGVVAVIFESRPNVCADAGVLCLKSGNAVILRGGSESFRSCRAIHACLVEGLREARLPEAAITLVPTRDRAAVGLLLSGMNGGIDVIVPRGGKSLVARVEAEARVPVFAHLEGVNHVYVDGAADLAMAKAVVLNSKMRRPGVCGAAETLLVDRSGVRDILKPLVEALIEAGCEVRGDSDVQGVDPRVRSAADSDWNTEYGDAIISARVVDGCGGAIDHIQRHGSRHTDAIVTEDPETAARFLNEVDSAIVLHNASTQFADGGEFGFGAEIGIATGKFHARGPVGAEQLTSFKYRVHGDGQVRP.

It belongs to the gamma-glutamyl phosphate reductase family.

Its subcellular location is the cytoplasm. The catalysed reaction is L-glutamate 5-semialdehyde + phosphate + NADP(+) = L-glutamyl 5-phosphate + NADPH + H(+). It functions in the pathway amino-acid biosynthesis; L-proline biosynthesis; L-glutamate 5-semialdehyde from L-glutamate: step 2/2. Catalyzes the NADPH-dependent reduction of L-glutamate 5-phosphate into L-glutamate 5-semialdehyde and phosphate. The product spontaneously undergoes cyclization to form 1-pyrroline-5-carboxylate. This Nitrobacter winogradskyi (strain ATCC 25391 / DSM 10237 / CIP 104748 / NCIMB 11846 / Nb-255) protein is Gamma-glutamyl phosphate reductase.